We begin with the raw amino-acid sequence, 159 residues long: SsrA-binding protein (159 aa).

The protein belongs to the SmpB family.

The protein localises to the cytoplasm. Required for rescue of stalled ribosomes mediated by trans-translation. Binds to transfer-messenger RNA (tmRNA), required for stable association of tmRNA with ribosomes. tmRNA and SmpB together mimic tRNA shape, replacing the anticodon stem-loop with SmpB. tmRNA is encoded by the ssrA gene; the 2 termini fold to resemble tRNA(Ala) and it encodes a 'tag peptide', a short internal open reading frame. During trans-translation Ala-aminoacylated tmRNA acts like a tRNA, entering the A-site of stalled ribosomes, displacing the stalled mRNA. The ribosome then switches to translate the ORF on the tmRNA; the nascent peptide is terminated with the 'tag peptide' encoded by the tmRNA and targeted for degradation. The ribosome is freed to recommence translation, which seems to be the essential function of trans-translation. In Acidiphilium cryptum (strain JF-5), this protein is SsrA-binding protein.